The sequence spans 160 residues: UPF0262 protein Oant_0325 (160 aa).

The protein belongs to the UPF0262 family.

This Brucella anthropi (strain ATCC 49188 / DSM 6882 / CCUG 24695 / JCM 21032 / LMG 3331 / NBRC 15819 / NCTC 12168 / Alc 37) (Ochrobactrum anthropi) protein is UPF0262 protein Oant_0325.